A 189-amino-acid polypeptide reads, in one-letter code: Riboflavin kinase (189 aa).

Mg(2+) is bound by residues Thr42 and Asn44. The active-site Nucleophile is Glu124.

Belongs to the flavokinase family. The cofactor is Zn(2+). Requires Mg(2+) as cofactor.

It carries out the reaction riboflavin + ATP = FMN + ADP + H(+). It functions in the pathway cofactor biosynthesis; FMN biosynthesis; FMN from riboflavin (ATP route): step 1/1. Functionally, catalyzes the phosphorylation of riboflavin (vitamin B2) to form flavin mononucleotide (FMN) coenzyme. In Candida glabrata (strain ATCC 2001 / BCRC 20586 / JCM 3761 / NBRC 0622 / NRRL Y-65 / CBS 138) (Yeast), this protein is Riboflavin kinase (FMN1).